A 399-amino-acid chain; its full sequence is Argininosuccinate synthase (399 aa).

9 to 17 (AYSGGLDTS) contributes to the ATP binding site. Residue Y88 coordinates L-citrulline. G118 serves as a coordination point for ATP. Residues T120, N124, and D125 each coordinate L-aspartate. N124 contacts L-citrulline. Residues R128, S176, E261, and Y273 each coordinate L-citrulline.

This sequence belongs to the argininosuccinate synthase family. Type 1 subfamily. Homotetramer.

It localises to the cytoplasm. The enzyme catalyses L-citrulline + L-aspartate + ATP = 2-(N(omega)-L-arginino)succinate + AMP + diphosphate + H(+). It participates in amino-acid biosynthesis; L-arginine biosynthesis; L-arginine from L-ornithine and carbamoyl phosphate: step 2/3. This chain is Argininosuccinate synthase, found in Mycobacterium leprae (strain TN).